A 205-amino-acid chain; its full sequence is Small ribosomal subunit protein uS4 (205 aa).

A disordered region spans residues 1 to 46 (MSKRASSKYKIDRRMGENIWGRPKSPVNRREYGPGQHGQRRKGKLS). In terms of domain architecture, S4 RNA-binding spans 94 to 154 (SRLDAIVYRA…QKSKQLAIVL (61 aa)).

This sequence belongs to the universal ribosomal protein uS4 family. Part of the 30S ribosomal subunit. Contacts protein S5. The interaction surface between S4 and S5 is involved in control of translational fidelity.

Functionally, one of the primary rRNA binding proteins, it binds directly to 16S rRNA where it nucleates assembly of the body of the 30S subunit. Its function is as follows. With S5 and S12 plays an important role in translational accuracy. The protein is Small ribosomal subunit protein uS4 of Allorhizobium ampelinum (strain ATCC BAA-846 / DSM 112012 / S4) (Agrobacterium vitis (strain S4)).